The following is a 273-amino-acid chain: Protein PERCC1 (273 aa).

2 disordered regions span residues 18 to 84 and 253 to 273; these read SHES…PETP and GGSELQSGGTQGLEGTQLAEV. Over residues 28 to 56 the composition is skewed to acidic residues; it reads EAPEISEEEEEEEEEEEEEEEEEEVDQDQ. Polar residues predominate over residues 67-83; it reads DSQSSGVVPQDPSSPET.

Specifically expressed in the stomach, pancreas and intestine. In gastrointestinal tissue, expression is primarily restricted to gastric G cells and duodenal enteroendocrine cells (EECs).

In terms of biological role, plays a critical role in intestinal function by promoting the development of enteroendocrine cells (EECs) of the gastrointestinal tract and pancreas. It is thereby required for normal enteroendocrine peptide hormone secretion. The sequence is that of Protein PERCC1 from Mus musculus (Mouse).